The primary structure comprises 209 residues: Large ribosomal subunit protein uL3 (209 aa).

Q150 is modified (N5-methylglutamine).

It belongs to the universal ribosomal protein uL3 family. Part of the 50S ribosomal subunit. Forms a cluster with proteins L14 and L19. Methylated by PrmB.

Functionally, one of the primary rRNA binding proteins, it binds directly near the 3'-end of the 23S rRNA, where it nucleates assembly of the 50S subunit. The polypeptide is Large ribosomal subunit protein uL3 (Cronobacter sakazakii (strain ATCC BAA-894) (Enterobacter sakazakii)).